We begin with the raw amino-acid sequence, 160 residues long: Protein YpjC (160 aa).

The protein is Protein YpjC (ypjC) of Escherichia coli (strain K12).